A 617-amino-acid polypeptide reads, in one-letter code: Dopamine beta-hydroxylase (617 aa).

The Cytoplasmic segment spans residues 1–16 (MPALSRWASLPGPSMR). The chain crosses the membrane as a helical; Signal-anchor for type II membrane protein span at residues 17–37 (EAAFMYSTAVAIFLVILVAAL). Over 38-617 (QGSAPRESPL…TVVSIGGGKG (580 aa)) the chain is Intragranular. A DOMON domain is found at 57-173 (GSLELSWNVS…GTVHLVYGIL (117 aa)). The N-linked (GlcNAc...) asparagine glycan is linked to Asn-64. Disulfide bonds link Cys-154-Cys-596, Cys-232-Cys-283, Cys-269-Cys-295, Cys-390-Cys-503, Cys-394-Cys-565, and Cys-466-Cys-488. Asn-184 carries an N-linked (GlcNAc...) (complex) asparagine glycan. The active site involves Tyr-230. Residues His-262 and His-263 each coordinate Cu(2+). His-333 is a binding site for Cu(2+). A glycan (N-linked (GlcNAc...) asparagine) is linked at Asn-344. The active site involves His-412. Cu(2+) contacts are provided by His-412, His-414, and Met-487. An N-linked (GlcNAc...) asparagine glycan is attached at Asn-566. A disordered region spans residues 590 to 617 (EEPTPQCPTSQGRSPAGPTVVSIGGGKG).

The protein belongs to the copper type II ascorbate-dependent monooxygenase family. In terms of assembly, homotetramer; composed of two disulfide-linked dimers. It depends on Cu(2+) as a cofactor. In terms of processing, N-glycosylated. Proteolytic cleavage after the membrane-anchor leads to the release of the soluble form.

The protein localises to the cytoplasmic vesicle. It localises to the secretory vesicle lumen. It is found in the secretory vesicle. The protein resides in the chromaffin granule lumen. Its subcellular location is the secreted. The protein localises to the secretory vesicle membrane. It localises to the chromaffin granule membrane. The catalysed reaction is dopamine + 2 L-ascorbate + O2 = (R)-noradrenaline + 2 monodehydro-L-ascorbate radical + H2O. The protein operates within catecholamine biosynthesis; (R)-noradrenaline biosynthesis; (R)-noradrenaline from dopamine: step 1/1. Functionally, catalyzes the hydroxylation of dopamine to noradrenaline (also known as norepinephrine), and is thus vital for regulation of these neurotransmitters. The protein is Dopamine beta-hydroxylase (DBH) of Homo sapiens (Human).